We begin with the raw amino-acid sequence, 149 residues long: Nucleoside diphosphate kinase (149 aa).

Residues Lys9, Phe57, Arg85, Thr91, Arg102, and Asn112 each contribute to the ATP site. Residue His115 is the Pros-phosphohistidine intermediate of the active site.

It belongs to the NDK family. In terms of assembly, homotetramer. Mg(2+) serves as cofactor.

Its subcellular location is the cytoplasm. The enzyme catalyses a 2'-deoxyribonucleoside 5'-diphosphate + ATP = a 2'-deoxyribonucleoside 5'-triphosphate + ADP. It carries out the reaction a ribonucleoside 5'-diphosphate + ATP = a ribonucleoside 5'-triphosphate + ADP. Its function is as follows. Major role in the synthesis of nucleoside triphosphates other than ATP. The ATP gamma phosphate is transferred to the NDP beta phosphate via a ping-pong mechanism, using a phosphorylated active-site intermediate. The protein is Nucleoside diphosphate kinase of Desulforamulus reducens (strain ATCC BAA-1160 / DSM 100696 / MI-1) (Desulfotomaculum reducens).